A 20-amino-acid polypeptide reads, in one-letter code: Putative antimicrobial protein 2 (20 aa).

Positions D1–S20 are disordered.

In terms of biological role, may have antimicrobial activity. This chain is Putative antimicrobial protein 2, found in Cenchritis muricatus (Beaded periwinkle).